The chain runs to 311 residues: MRKPTSSLTRRSVLGAGLGLGGALALGSTTASAASAGTTPSENPAAVRRLRALEREHQARIGVFALNLATGASLLHRAHELFPMCSVFKTLAAAAVLRDLDHDGSQLARVIRYTEADVTKSGHAPVTKDHIDTGMTIRDLCDATIRYSDNCAANLLLRELGGPTAVTRFCRSLGDPVTRLDRWEPELNSGEPDRRTDTTSPYAIARTYQRLVLGNALNRPDRALLTDWLLRNTTTLTTFRTGLPKGWTVADKSGGGDTYGTRNEAAIAWTPDGAPVLLTALTHKPSLPTAPGDTPLIIKLATVLSEAVAPA.

A signal peptide (tat-type signal) is located at residues 1 to 36; the sequence is MRKPTSSLTRRSVLGAGLGLGGALALGSTTASAASA. Ser-86 (acyl-ester intermediate) is an active-site residue. Position 252 to 254 (252 to 254) interacts with substrate; it reads KSG.

The protein belongs to the class-A beta-lactamase family. Predicted to be exported by the Tat system. The position of the signal peptide cleavage has not been experimentally proven.

It catalyses the reaction a beta-lactam + H2O = a substituted beta-amino acid. Hydrolyzes benzylpenicillin and cloxacillin (at 10% of the rate of benzylpenicillin). This Streptomyces cellulosae protein is Beta-lactamase (bla).